We begin with the raw amino-acid sequence, 650 residues long: Acetyl-coenzyme A synthetase (650 aa).

CoA-binding positions include 191–194 (RGGR), threonine 311, and asparagine 335. Residues 387–389 (GEP), 411–416 (DTWWQT), aspartate 501, and arginine 516 each bind ATP. A CoA-binding site is contributed by serine 524. Arginine 527 contributes to the ATP binding site. The Mg(2+) site is built by valine 538, histidine 540, and isoleucine 543. Arginine 585 lines the CoA pocket. At lysine 610 the chain carries N6-acetyllysine.

It belongs to the ATP-dependent AMP-binding enzyme family. Requires Mg(2+) as cofactor. In terms of processing, acetylated. Deacetylation by the SIR2-homolog deacetylase activates the enzyme.

It catalyses the reaction acetate + ATP + CoA = acetyl-CoA + AMP + diphosphate. Its function is as follows. Catalyzes the conversion of acetate into acetyl-CoA (AcCoA), an essential intermediate at the junction of anabolic and catabolic pathways. AcsA undergoes a two-step reaction. In the first half reaction, AcsA combines acetate with ATP to form acetyl-adenylate (AcAMP) intermediate. In the second half reaction, it can then transfer the acetyl group from AcAMP to the sulfhydryl group of CoA, forming the product AcCoA. The chain is Acetyl-coenzyme A synthetase from Vibrio vulnificus (strain CMCP6).